A 528-amino-acid chain; its full sequence is Alpha-amylase (528 aa).

A signal peptide spans 1-28 (MNKKWLNIPALIALLAAIAFGSVAPAEA). Asparagine 168 and aspartate 228 together coordinate Ca(2+). Aspartate 258 functions as the Nucleophile in the catalytic mechanism. Residue histidine 262 participates in Ca(2+) binding. Catalysis depends on glutamate 286, which acts as the Proton donor.

It belongs to the glycosyl hydrolase 13 family. As to quaternary structure, monomer. It depends on Ca(2+) as a cofactor.

The catalysed reaction is Endohydrolysis of (1-&gt;4)-alpha-D-glucosidic linkages in polysaccharides containing three or more (1-&gt;4)-alpha-linked D-glucose units.. This chain is Alpha-amylase, found in Niallia circulans (Bacillus circulans).